A 436-amino-acid polypeptide reads, in one-letter code: UPF0597 protein YhaM (436 aa).

Belongs to the UPF0597 family.

In Shigella boydii serotype 4 (strain Sb227), this protein is UPF0597 protein YhaM.